The following is a 522-amino-acid chain: Putative aminopeptidase W07G4.4 (522 aa).

Residues lysine 271 and aspartate 276 each contribute to the Zn(2+) site. Lysine 283 is an active-site residue. The Zn(2+) site is built by aspartate 294, aspartate 354, and glutamate 356. Arginine 358 is a catalytic residue.

This sequence belongs to the peptidase M17 family. It depends on Zn(2+) as a cofactor.

The chain is Putative aminopeptidase W07G4.4 (lap-2) from Caenorhabditis elegans.